The primary structure comprises 163 residues: tRNA-acetylating toxin 2 (163 aa).

The acetyl-CoA site is built by leucine 89, valine 91, histidine 96, glycine 97, glutamine 98, glycine 99, alanine 101, arginine 102, and glutamate 132. The active site involves tyrosine 137. An acetyl-CoA-binding site is contributed by arginine 139.

It belongs to the acetyltransferase family. GNAT subfamily. In terms of assembly, homodimer (in absence of antitoxin). Forms a complex with cognate antitoxin TacA2. Forms a 4:2 antitoxin:toxin complex with cognate antitoxin TacA2.

The enzyme catalyses glycyl-tRNA(Gly) + acetyl-CoA = N-acetylglycyl-tRNA(Gly) + CoA + H(+). Toxic component of a type II toxin-antitoxin (TA) system. Acetylates tRNA and inhibits translation. Acetylates exclusively Gly in situ. Overexpression during the lag phase of a tacA2-tacT2 deletion strain leads to very small increase in persister cells in the presence of cefotaxime but no detectable growth phenotype in absence of antibiotics. Compared to a protein with a single amino acid change (TacT2 from S.enterica NCTC 13349, Glu-29 is Lys in NCTC 13349) this protein binds tRNA very poorly and acetylates tRNA very poorly. Persister cell formation is neutralized by cognate antitoxin TacA2. Neutralized only by cognate antitoxin TacA2 (A8), but not by TacA1 or TacA3. Plays a role in persister cell formation. Its function is as follows. The TacA2-TacT2 complex both represses and derepresses expression of its own operon. This Salmonella typhimurium (strain 14028s / SGSC 2262) protein is tRNA-acetylating toxin 2.